The chain runs to 84 residues: MKVALIVCLVWVMAMMELVSCECWSQADCSDGHCCAGSSFSKNCRPYGGDGEQCEPRNKYEVYSTGCPCEENLMCSVINRCQSA.

Positions 1 to 21 are cleaved as a signal peptide; that stretch reads MKVALIVCLVWVMAMMELVSC. Disulfide bonds link Cys-23–Cys-35, Cys-29–Cys-44, Cys-34–Cys-67, Cys-54–Cys-75, and Cys-69–Cys-81.

Belongs to the AVIT (prokineticin) family. Expressed by the venom gland.

Its subcellular location is the secreted. This is U8-theraphotoxin-Hhn1c 3 from Cyriopagopus hainanus (Chinese bird spider).